Reading from the N-terminus, the 154-residue chain is Putative pre-16S rRNA nuclease (154 aa).

The protein belongs to the YqgF nuclease family.

The protein localises to the cytoplasm. Could be a nuclease involved in processing of the 5'-end of pre-16S rRNA. This is Putative pre-16S rRNA nuclease from Rickettsia peacockii (strain Rustic).